A 220-amino-acid polypeptide reads, in one-letter code: Putative DNA repair glycosylase MJ1434 (220 aa).

4 residues coordinate [4Fe-4S] cluster: cysteine 202, cysteine 208, cysteine 211, and cysteine 217.

Belongs to the Nth/MutY family. The cofactor is [4Fe-4S] cluster.

This is Putative DNA repair glycosylase MJ1434 from Methanocaldococcus jannaschii (strain ATCC 43067 / DSM 2661 / JAL-1 / JCM 10045 / NBRC 100440) (Methanococcus jannaschii).